Here is a 294-residue protein sequence, read N- to C-terminus: Tetraspanin-15 (294 aa).

Over 1–23 the chain is Cytoplasmic; that stretch reads MPRGDSEQVRYCARFSYLWLKFS. Residues 24-44 form a helical membrane-spanning segment; the sequence is LVIYSTVFWLIGGLVLSVGIY. Topologically, residues 45–62 are extracellular; that stretch reads AEVERQKYKTLESAFLAP. The chain crosses the membrane as a helical span at residues 63 to 83; the sequence is AIILILLGVVMFIVSFIGVLA. Residues 84-93 lie on the Cytoplasmic side of the membrane; sequence SLRDNLCLLQ. A helical membrane pass occupies residues 94–114; it reads AFMYILGICLIIELIGGVVAL. Topologically, residues 115–235 are extracellular; sequence IFRNQTIDFL…WFTDNYTIMA (121 aa). N-linked (GlcNAc...) asparagine glycosylation occurs at Asn-118. 4 disulfides stabilise this stretch: Cys-154-Cys-219, Cys-155-Cys-185, Cys-171-Cys-179, and Cys-186-Cys-198. 2 N-linked (GlcNAc...) asparagine glycosylation sites follow: Asn-189 and Asn-230. A helical membrane pass occupies residues 236–256; the sequence is GVLLGILLPQFLGVLLTFLYI. Residues 257-294 are Cytoplasmic-facing; sequence TRVEDIITEHSVTDGLLGPGTKAGVEAAGTGCCMCYPI.

It belongs to the tetraspanin (TM4SF) family. As to quaternary structure, interacts with ADAM10; the interaction influences ADAM10 substrate specificity, endocytosis and turnover. In terms of processing, palmitoylated.

Its subcellular location is the cell membrane. It localises to the late endosome membrane. Functionally, part of TspanC8 subgroup, composed of 6 members that interact with the transmembrane metalloprotease ADAM10. This interaction is required for ADAM10 exit from the endoplasmic reticulum and for enzymatic maturation and trafficking to the cell surface as well as substrate specificity. Different TspanC8/ADAM10 complexes have distinct substrates. Promotes ADAM10-mediated cleavage of CDH2. Negatively regulates ligand-induced Notch activity probably by regulating ADAM10 activity. This is Tetraspanin-15 (TSPAN15) from Bos taurus (Bovine).